A 1057-amino-acid chain; its full sequence is Carbamoyl phosphate synthase large chain (1057 aa).

The carboxyphosphate synthetic domain stretch occupies residues 1–401 (MPKRNDIKTI…SLLKAIRSLE (401 aa)). Residues R129, R169, G175, G176, K208, I210, E215, G241, I242, H243, Q284, and E298 each contribute to the ATP site. The region spanning 133 to 327 (RTLMNDLNVP…IAKLAAKIAV (195 aa)) is the ATP-grasp 1 domain. Q284, E298, and N300 together coordinate Mg(2+). Residues Q284, E298, and N300 each contribute to the Mn(2+) site. The oligomerization domain stretch occupies residues 402–546 (YGVHHLGLPN…YGTYETENES (145 aa)). The segment at 547-929 (IVTDKEKILV…ALFKGLTGSG (383 aa)) is carbamoyl phosphate synthetic domain. Residues 671–861 (EALLRKINVP…MAQLAMRAII (191 aa)) form the ATP-grasp 2 domain. The ATP site is built by R707, R746, L748, E752, G777, V778, H779, S780, Q820, and E832. Mg(2+) is bound by residues Q820, E832, and N834. Q820, E832, and N834 together coordinate Mn(2+). In terms of domain architecture, MGS-like spans 930 to 1057 (VEVKDHGTVL…ESMTFTMRQM (128 aa)). Positions 930–1057 (VEVKDHGTVL…ESMTFTMRQM (128 aa)) are allosteric domain.

Belongs to the CarB family. In terms of assembly, composed of two chains; the small (or glutamine) chain promotes the hydrolysis of glutamine to ammonia, which is used by the large (or ammonia) chain to synthesize carbamoyl phosphate. Tetramer of heterodimers (alpha,beta)4. It depends on Mg(2+) as a cofactor. Requires Mn(2+) as cofactor.

It catalyses the reaction hydrogencarbonate + L-glutamine + 2 ATP + H2O = carbamoyl phosphate + L-glutamate + 2 ADP + phosphate + 2 H(+). The enzyme catalyses hydrogencarbonate + NH4(+) + 2 ATP = carbamoyl phosphate + 2 ADP + phosphate + 2 H(+). It participates in amino-acid biosynthesis; L-arginine biosynthesis; carbamoyl phosphate from bicarbonate: step 1/1. Its pathway is pyrimidine metabolism; UMP biosynthesis via de novo pathway; (S)-dihydroorotate from bicarbonate: step 1/3. In terms of biological role, large subunit of the glutamine-dependent carbamoyl phosphate synthetase (CPSase). CPSase catalyzes the formation of carbamoyl phosphate from the ammonia moiety of glutamine, carbonate, and phosphate donated by ATP, constituting the first step of 2 biosynthetic pathways, one leading to arginine and/or urea and the other to pyrimidine nucleotides. The large subunit (synthetase) binds the substrates ammonia (free or transferred from glutamine from the small subunit), hydrogencarbonate and ATP and carries out an ATP-coupled ligase reaction, activating hydrogencarbonate by forming carboxy phosphate which reacts with ammonia to form carbamoyl phosphate. The chain is Carbamoyl phosphate synthase large chain from Staphylococcus aureus (strain Mu3 / ATCC 700698).